Here is a 261-residue protein sequence, read N- to C-terminus: Thiamine thiazole synthase (261 aa).

NAD(+)-binding positions include Ser40, 59–60 (ER), Gly67, Val133, and 159–161 (HID). Positions 161 and 176 each coordinate Fe cation. Positions 179 and 226 each coordinate NAD(+). Arg236 provides a ligand contact to glycine.

Belongs to the THI4 family. Homooctamer; tetramer of dimers. The cofactor is Fe(2+).

The catalysed reaction is hydrogen sulfide + glycine + NAD(+) = ADP-5-ethyl-4-methylthiazole-2-carboxylate + nicotinamide + 3 H2O + H(+). It participates in cofactor biosynthesis; thiamine diphosphate biosynthesis. Its function is as follows. Involved in the biosynthesis of the thiazole moiety of thiamine. Catalyzes the conversion of NAD and glycine to adenosine diphosphate 5-(2-hydroxyethyl)-4-methylthiazole-2-carboxylate (ADT), an adenylated thiazole intermediate, using free sulfide as a source of sulfur. The sequence is that of Thiamine thiazole synthase from Methanococcus maripaludis (strain C6 / ATCC BAA-1332).